A 66-amino-acid polypeptide reads, in one-letter code: Large ribosomal subunit protein bL35 (66 aa).

This sequence belongs to the bacterial ribosomal protein bL35 family.

This Beijerinckia indica subsp. indica (strain ATCC 9039 / DSM 1715 / NCIMB 8712) protein is Large ribosomal subunit protein bL35.